Reading from the N-terminus, the 636-residue chain is DNA primase (636 aa).

The segment at 44 to 68 adopts a CHC2-type zinc-finger fold; sequence CPFHDEKTPSFHVRPNHGHFHCFGC. A Toprim domain is found at 266 to 352; it reads HQAVVVEGYT…SGQSFVAVAA (87 aa). 3 residues coordinate Mg(2+): Glu272, Asp323, and Asp325. Residues 443-459 show a composition bias toward basic and acidic residues; sequence REEAKGGGRKDNNRRGQ. Residues 443-481 are disordered; the sequence is REEAKGGGRKDNNRRGQETAARPKPPPVQRPDPTDPTLW.

It belongs to the DnaG primase family. Monomer. Interacts with DnaB. It depends on Zn(2+) as a cofactor. Mg(2+) is required as a cofactor.

It carries out the reaction ssDNA + n NTP = ssDNA/pppN(pN)n-1 hybrid + (n-1) diphosphate.. Its function is as follows. RNA polymerase that catalyzes the synthesis of short RNA molecules used as primers for DNA polymerase during DNA replication. This Mycolicibacterium smegmatis (strain ATCC 700084 / mc(2)155) (Mycobacterium smegmatis) protein is DNA primase.